The following is a 436-amino-acid chain: Cyclic GMP-AMP synthase (436 aa).

112 to 117 (QGSFQY) is a binding site for GTP. Positions 131 and 133 each coordinate Mg(2+). Residue Arg182 coordinates ATP. Asp193 contributes to the Mg(2+) binding site. Ser259 contacts ATP. Lys287, Ser301, and Asp348 together coordinate GTP. Disordered regions lie at residues 339 to 358 (RGVE…PSYK) and 417 to 436 (AQEP…MVSG). Over residues 419–436 (EPSSASKPEKISSTMVSG) the composition is skewed to polar residues. Gly436 participates in a covalent cross-link: Glycyl lysine isopeptide (Gly-Lys) (interchain with K-? in acceptor proteins).

It belongs to the CD-NTase family. A01 subfamily. In terms of assembly, monomer. Interacts with Cap2 in the presence and absence of phage T2. A Cap2 dimer is bound on either side by a DncV monomer. The cofactor is Mg(2+). In terms of processing, in bacteria expressing capV-cdnD-cap2, this protein is conjugated to a number of other proteins (by Cap2 via this protein's C-terminal Gly residue), many of which are involved in metabolism. More conjugated protein is found in the absence of Cap3.

The catalysed reaction is GTP + ATP = 3',3'-cGAMP + 2 diphosphate. Primed for activation by Cap2 which conjugates it to cellular proteins; priming is target protein-specific (green fluorescent protein does not activate the enzyme), but which protein(s) activate is unclear. Enzymatic activity of DncV is inhibited by folate-like molecules, such as 5-methyltetrahydrofolate di-glutamate and 5-methyltetrahydrofolate, suggesting the existence of a signaling pathway that links folate-like metabolism cofactors to the regulation of cyclic dinucleotide second messenger synthesis. Lacks a regulatory loop and is constitutively activated. In terms of biological role, cyclic nucleotide synthase (second messenger synthase) of a CBASS antivirus system. CBASS (cyclic oligonucleotide-based antiphage signaling system) provides immunity against bacteriophages. The CD-NTase protein (DncV, this protein) synthesizes cyclic nucleotides in response to infection; these serve as specific second messenger signals. The signals activate a diverse range of effectors, leading to bacterial cell death and thus abortive phage infection. A type II-A(GA) CBASS system. Catalyzes the synthesis of 3',3'-cyclic GMP-AMP (cGAMP), a second messenger in cell signal transduction, from GTP and ATP in response to phage infection. Also able to produce c-di-AMP and c-di-GMP from ATP and GTP, respectively; however, cGAMP is the dominant molecule produced by DncV in vivo, contrary to the 2'3'-cGAMP produced by eukaryotes. Is required for efficient V.cholerae intestinal colonization, and down-regulates the colonization-influencing process of chemotaxis. Is not active with dATP, TTP, UTP or CTP. Its product controls the activity of cGAMP-activated phospholipase CapV, a patatin-like lipase that is a direct cGAMP receptor encoded in the dncV operon. Its function is as follows. Protects E.coli against phage infection. When the CBASS operon (capV-dncV-cap2-cap3) is introduced in E.coli MG1655 there is about 100-fold protection against phages P1 and T2. When the operon is introduced in E.coli MG1655 there is a more than 10(3) decrease in the efficiency of T2 plaque formation. Protects 100-fold against phage T5, offers no protection against T7. When the operon is introduced in E.coli MG1655 it protects against phages T2, T4, T5 and T6. Another paper shows the operon confers protection against phages P1, T2, T5 and T6 but not T4 or lambda. This Vibrio cholerae serotype O1 (strain ATCC 39315 / El Tor Inaba N16961) protein is Cyclic GMP-AMP synthase.